We begin with the raw amino-acid sequence, 131 residues long: Small ribosomal subunit protein eS6 (131 aa).

A disordered region spans residues 76–95; sequence APPGFKPKRKGERRRKTVRG. Over residues 81 to 93 the composition is skewed to basic residues; that stretch reads KPKRKGERRRKTV.

This sequence belongs to the eukaryotic ribosomal protein eS6 family.

This chain is Small ribosomal subunit protein eS6, found in Methanocaldococcus jannaschii (strain ATCC 43067 / DSM 2661 / JAL-1 / JCM 10045 / NBRC 100440) (Methanococcus jannaschii).